We begin with the raw amino-acid sequence, 434 residues long: D-amino acid dehydrogenase (434 aa).

An FAD-binding site is contributed by 3–17 (VIVLGSGVIGTTTAY).

Belongs to the DadA oxidoreductase family. The cofactor is FAD.

The enzyme catalyses a D-alpha-amino acid + A + H2O = a 2-oxocarboxylate + AH2 + NH4(+). Its function is as follows. Oxidative deamination of D-amino acids. This is D-amino acid dehydrogenase from Bordetella parapertussis (strain 12822 / ATCC BAA-587 / NCTC 13253).